The chain runs to 928 residues: G-protein coupled receptor family C group 6 member A (928 aa).

Residues 1 to 20 (MALSFVFITCFMILLDTSQS) form the signal peptide. The Extracellular portion of the chain corresponds to 21–594 (CHTPDDFVAI…EYLDWDDSLA (574 aa)). 2 N-linked (GlcNAc...) asparagine glycosylation sites follow: Asn332 and Asn555. The helical transmembrane segment at 595–615 (LLLIALSLLGIAFVLAVGIIF) threads the bilayer. Topologically, residues 616-630 (TRNLKTPVVKSSGGL) are cytoplasmic. A helical membrane pass occupies residues 631–651 (VVCYVMLACHALNFASTGFFI). Topologically, residues 652-669 (GEPQDFTCKTRQTLFGVS) are extracellular. The helical transmembrane segment at 670 to 690 (FTLCVSCILTKSLKILLAFSF) threads the bilayer. Residues 691 to 706 (DPTLKTFLKCLYRPVP) are Cytoplasmic-facing. Residues 707–727 (IVLTCTGIQVVICTLWLVLAA) form a helical membrane-spanning segment. Over 728-750 (PTVEENTSLPRVIILECEEGSAL) the chain is Extracellular. A helical membrane pass occupies residues 751 to 771 (AFGTMLGYIAVLAFICFVFAF). Over 772–784 (KGRKLPENYNEAK) the chain is Cytoplasmic. A helical membrane pass occupies residues 785–805 (FLTFGMLIYFIAWITFIPVYA). Residues 806 to 812 (TTFGKYL) are Extracellular-facing. The chain crosses the membrane as a helical span at residues 813 to 833 (PAVEIIVILISNYGILCCTFF). Residues 834–928 (PKCYIILCKQ…TLHQKRSSSI (95 aa)) lie on the Cytoplasmic side of the membrane.

It belongs to the G-protein coupled receptor 3 family. Homodimer; disulfide-linked. N-glycosylated. In terms of tissue distribution, high expression in soft palate. Weak expression in kidney, liver, lung and brain. No expression detected in heart, testis, skeletal muscle amd spleen.

It localises to the cell membrane. Its function is as follows. Receptor activated by multiple ligands, including osteocalcin (BGLAP), basic amino acids, and various cations. Activated by amino acids with a preference for basic amino acids such as L-Lys, L-Arg and L-ornithine but also by small and polar amino acids. The L-alpha amino acids respond is augmented by divalent cations Ca(2+) and Mg(2+). Seems to act through a G(q)/G(11) and G(i)-coupled pathway. Regulates testosterone production by acting as a ligand for uncarboxylated osteocalcin hormone: osteocalcin-binding at the surface of Leydig cells initiates a signaling response that promotes the expression of enzymes required for testosterone synthesis in a CREB-dependent manner. Mediates the non-genomic effects of androgens in multiple tissue. May coordinate nutritional and hormonal anabolic signals through the sensing of extracellular amino acids, osteocalcin, divalent ions and its responsiveness to anabolic steroids. The protein is G-protein coupled receptor family C group 6 member A (Gprc6a) of Rattus norvegicus (Rat).